Consider the following 255-residue polypeptide: Indole-3-glycerol phosphate synthase (255 aa).

This sequence belongs to the TrpC family.

It catalyses the reaction 1-(2-carboxyphenylamino)-1-deoxy-D-ribulose 5-phosphate + H(+) = (1S,2R)-1-C-(indol-3-yl)glycerol 3-phosphate + CO2 + H2O. The protein operates within amino-acid biosynthesis; L-tryptophan biosynthesis; L-tryptophan from chorismate: step 4/5. This Streptococcus pneumoniae (strain Taiwan19F-14) protein is Indole-3-glycerol phosphate synthase.